A 55-amino-acid chain; its full sequence is Large ribosomal subunit protein bL33 (55 aa).

Belongs to the bacterial ribosomal protein bL33 family.

This chain is Large ribosomal subunit protein bL33, found in Acidiphilium cryptum (strain JF-5).